The sequence spans 85 residues: Beta-insect depressant toxin BjIT2 (85 aa).

The N-terminal stretch at 1–21 (MKLLLLLVISASMLLECLVNA) is a signal peptide. The region spanning 22–82 (DGYIRKKDGC…TWKSSTNTCG (61 aa)) is the LCN-type CS-alpha/beta domain. Cystine bridges form between Cys-31–Cys-81, Cys-35–Cys-56, Cys-42–Cys-63, and Cys-46–Cys-65. Positions 83 to 85 (RKK) are cleaved as a propeptide — removed by a carboxypeptidase.

It belongs to the long (4 C-C) scorpion toxin superfamily. Sodium channel inhibitor family. Beta subfamily. Post-translationally, C-terminal basic residues are removed by a carboxypeptidase. In terms of tissue distribution, expressed by the venom gland.

The protein resides in the secreted. Depressant insect beta-toxins cause a transient contraction paralysis followed by a slow flaccid paralysis. They bind voltage-independently at site-4 of sodium channels (Nav) and shift the voltage of activation toward more negative potentials thereby affecting sodium channel activation and promoting spontaneous and repetitive firing. This toxin is active only on insects. This is Beta-insect depressant toxin BjIT2 from Hottentotta judaicus (Black scorpion).